Consider the following 170-residue polypeptide: Lipoprotein signal peptidase (170 aa).

3 helical membrane-spanning segments follow: residues 12-32 (WYWV…WVLA), 67-87 (WQRW…TVWL), and 93-113 (GLWR…GNLI). Active-site residues include Asp123 and Asp141. Residues 133-153 (HFPAFNIADSAICVGAGLIIL) form a helical membrane-spanning segment.

This sequence belongs to the peptidase A8 family.

The protein localises to the cell inner membrane. It catalyses the reaction Release of signal peptides from bacterial membrane prolipoproteins. Hydrolyzes -Xaa-Yaa-Zaa-|-(S,diacylglyceryl)Cys-, in which Xaa is hydrophobic (preferably Leu), and Yaa (Ala or Ser) and Zaa (Gly or Ala) have small, neutral side chains.. The protein operates within protein modification; lipoprotein biosynthesis (signal peptide cleavage). In terms of biological role, this protein specifically catalyzes the removal of signal peptides from prolipoproteins. The polypeptide is Lipoprotein signal peptidase (Shewanella loihica (strain ATCC BAA-1088 / PV-4)).